The chain runs to 120 residues: MSYRKLGRTTSQRKALLRDLATDLIINERIETTEARAKELRSVMEKMITLGKRGDLHARRQAAAFIRKEVANSETGQDALQKLFSDIAPRYQDRQGGYTRIMKLGPRRGDGAPMVIIELV.

Belongs to the bacterial ribosomal protein bL17 family. As to quaternary structure, part of the 50S ribosomal subunit. Contacts protein L32.

In Geobacillus kaustophilus (strain HTA426), this protein is Large ribosomal subunit protein bL17.